Here is a 145-residue protein sequence, read N- to C-terminus: MELVEVLKRGVQQVTGHGGLRGLLRVFFRANDIRIGTLVGEDKYGNKYYEDNKQFFGRHRWVIYTTEMNGKNTFWDVDGSMVPPEWHRWLHCMTDDPPTTNPPTARKFIWTNHKFNVSATPEQYVPYSTTRKKIHEWVPPSTPYK.

Position 1 is an N-acetylmethionine (M1).

The protein belongs to the complex I NDUFA12 subunit family. As to quaternary structure, complex I is composed of 45 different subunits.

It is found in the mitochondrion inner membrane. In terms of biological role, accessory subunit of the mitochondrial membrane respiratory chain NADH dehydrogenase (Complex I), that is believed not to be involved in catalysis. Complex I functions in the transfer of electrons from NADH to the respiratory chain. The immediate electron acceptor for the enzyme is believed to be ubiquinone. The sequence is that of NADH dehydrogenase [ubiquinone] 1 alpha subcomplex subunit 12 (Ndufa12) from Mus musculus (Mouse).